The following is a 132-amino-acid chain: Agouti-signaling protein (132 aa).

The signal sequence occupies residues 1 to 22; that stretch reads MDVTRLLLATLLVFLCFFTVYS. Asparagine 39 carries N-linked (GlcNAc...) asparagine glycosylation. Residues 62–88 are disordered; that stretch reads ISRKEAEKKRSSKKEASMKKVAQPRTP. A compositionally biased stretch (basic and acidic residues) spans 63–79; that stretch reads SRKEAEKKRSSKKEASM. 5 cysteine pairs are disulfide-bonded: cysteine 93/cysteine 108, cysteine 100/cysteine 114, cysteine 107/cysteine 125, cysteine 111/cysteine 132, and cysteine 116/cysteine 123. The Agouti domain occupies 93–132; sequence CVATRYSCKPPAPACCDPCASCQCRFFRSACSCRVLRLNC.

Its subcellular location is the secreted. In terms of biological role, involved in the regulation of melanogenesis. The binding of ASP to MC1R precludes alpha-MSH initiated signaling and thus blocks production of cAMP, leading to a down-regulation of eumelanogenesis (brown/black pigment) and thus increasing synthesis of pheomelanin (yellow/red pigment). The chain is Agouti-signaling protein (ASIP) from Semnopithecus entellus (Northern plains gray langur).